Reading from the N-terminus, the 465-residue chain is Na(+)-translocating NADH-quinone reductase subunit A (465 aa).

It belongs to the NqrA family. In terms of assembly, composed of six subunits; NqrA, NqrB, NqrC, NqrD, NqrE and NqrF.

The enzyme catalyses a ubiquinone + n Na(+)(in) + NADH + H(+) = a ubiquinol + n Na(+)(out) + NAD(+). Functionally, NQR complex catalyzes the reduction of ubiquinone-1 to ubiquinol by two successive reactions, coupled with the transport of Na(+) ions from the cytoplasm to the periplasm. NqrA to NqrE are probably involved in the second step, the conversion of ubisemiquinone to ubiquinol. In Chlamydia trachomatis serovar A (strain ATCC VR-571B / DSM 19440 / HAR-13), this protein is Na(+)-translocating NADH-quinone reductase subunit A.